A 156-amino-acid polypeptide reads, in one-letter code: Arginine repressor (156 aa).

It belongs to the ArgR family.

It is found in the cytoplasm. The protein operates within amino-acid biosynthesis; L-arginine biosynthesis [regulation]. In terms of biological role, regulates arginine biosynthesis genes. The chain is Arginine repressor from Yersinia pseudotuberculosis serotype I (strain IP32953).